A 513-amino-acid chain; its full sequence is Nitrate transporter 2.2 (513 aa).

A run of 12 helical transmembrane segments spans residues 38–58, 74–94, 98–118, 128–148, 158–178, 196–216, 247–265, 281–301, 323–343, 351–371, 383–403, and 419–439; these read WICF…APVI, VSAV…VDVV, YGAA…ALVT, FFIG…GTMF, AIAA…MPLI, AFFV…LLGI, LGNY…SFGV, FGLN…MNIF, LWVL…MGKV, IVIM…HFGI, VSGL…AIWF, and FVWM…IWFP.

The protein belongs to the major facilitator superfamily. Nitrate/nitrite porter (TC 2.A.1.8) family.

The protein localises to the cell membrane. Its function is as follows. Involved in nitrate transport, but does not seem to be able to mediate transport by its own. Acts as a dual component transporter with NAR2 (system 2). Involved in a high affinity transport specific for nitrate. This Chlamydomonas reinhardtii (Chlamydomonas smithii) protein is Nitrate transporter 2.2.